Here is a 211-residue protein sequence, read N- to C-terminus: Large ribosomal subunit protein uL3 (211 aa).

This sequence belongs to the universal ribosomal protein uL3 family. As to quaternary structure, part of the 50S ribosomal subunit. Forms a cluster with proteins L14 and L19.

Its function is as follows. One of the primary rRNA binding proteins, it binds directly near the 3'-end of the 23S rRNA, where it nucleates assembly of the 50S subunit. The protein is Large ribosomal subunit protein uL3 of Geotalea daltonii (strain DSM 22248 / JCM 15807 / FRC-32) (Geobacter daltonii).